Here is a 718-residue protein sequence, read N- to C-terminus: D-(-)-3-hydroxybutyrate oligomer hydrolase (718 aa).

Residue Ser320 is the Charge relay system of the active site.

This sequence belongs to the D-(-)-3-hydroxybutyrate oligomer hydrolase family.

It localises to the cytoplasm. It catalyses the reaction (3R)-hydroxybutanoate dimer + H2O = 2 (R)-3-hydroxybutanoate + H(+). The protein operates within lipid metabolism; butanoate metabolism. Its activity is regulated as follows. Inhibited by diisopropylfluorophosphate (DFP). Participates in the degradation of poly-3-hydroxybutyrate (PHB). It works downstream of poly(3-hydroxybutyrate) depolymerase, hydrolyzing D(-)-3-hydroxybutyrate oligomers of various length (3HB-oligomers) into 3HB-monomers. Seems to have also poly(3-hydroxybutyrate) depolymerase activity since it is able to release 3HB-monomers from artificial amorphous PHB. This Cupriavidus necator (strain ATCC 17699 / DSM 428 / KCTC 22496 / NCIMB 10442 / H16 / Stanier 337) (Ralstonia eutropha) protein is D-(-)-3-hydroxybutyrate oligomer hydrolase (phaZ2).